We begin with the raw amino-acid sequence, 192 residues long: Flagellar transcriptional regulator FlhC (192 aa).

Residues C137, C140, C157, and C160 each contribute to the Zn(2+) site.

Belongs to the FlhC family. In terms of assembly, heterohexamer composed of two FlhC and four FlhD subunits. Each FlhC binds a FlhD dimer, forming a heterotrimer, and a hexamer assembles by dimerization of two heterotrimers. The cofactor is Zn(2+).

It localises to the cytoplasm. Functions in complex with FlhD as a master transcriptional regulator that regulates transcription of several flagellar and non-flagellar operons by binding to their promoter region. Activates expression of class 2 flagellar genes, including fliA, which is a flagellum-specific sigma factor that turns on the class 3 genes. Also regulates genes whose products function in a variety of physiological pathways. In Escherichia coli O6:H1 (strain CFT073 / ATCC 700928 / UPEC), this protein is Flagellar transcriptional regulator FlhC.